A 251-amino-acid chain; its full sequence is uncharacterized protein (251 aa).

To Anabaena PCC 7120 alr2406.

This is an uncharacterized protein from Synechocystis sp. (strain ATCC 27184 / PCC 6803 / Kazusa).